Reading from the N-terminus, the 151-residue chain is Acidic phospholipase A2 4 (151 aa).

The signal sequence occupies residues 1–27; sequence MYPAHLLVLLAVCVSLLGAASIPARPL. Disulfide bonds link cysteine 38-cysteine 104, cysteine 54-cysteine 151, cysteine 56-cysteine 72, cysteine 71-cysteine 132, cysteine 78-cysteine 125, cysteine 88-cysteine 118, and cysteine 111-cysteine 123. Residues tyrosine 55, glycine 57, and glycine 59 each coordinate Ca(2+). Histidine 75 is an active-site residue. Position 76 (aspartate 76) interacts with Ca(2+). Aspartate 126 is a catalytic residue.

This sequence belongs to the phospholipase A2 family. Group I subfamily. D49 sub-subfamily. Ca(2+) is required as a cofactor. In terms of tissue distribution, expressed by the venom gland.

It localises to the secreted. It carries out the reaction a 1,2-diacyl-sn-glycero-3-phosphocholine + H2O = a 1-acyl-sn-glycero-3-phosphocholine + a fatty acid + H(+). Functionally, PLA2 catalyzes the calcium-dependent hydrolysis of the 2-acyl groups in 3-sn-phosphoglycerides. This is Acidic phospholipase A2 4 from Tropidechis carinatus (Australian rough-scaled snake).